The primary structure comprises 261 residues: Small ribosomal subunit protein eS1 (261 aa).

Positions 1-18 are enriched in basic residues; that stretch reads MAVGKNKRISKGKKGGKK. The tract at residues 1 to 22 is disordered; sequence MAVGKNKRISKGKKGGKKKAAD.

It belongs to the eukaryotic ribosomal protein eS1 family. Component of the small ribosomal subunit. Mature ribosomes consist of a small (40S) and a large (60S) subunit. The 40S subunit contains about 33 different proteins and 1 molecule of RNA (18S). The 60S subunit contains about 49 different proteins and 3 molecules of RNA (25S, 5.8S and 5S).

It is found in the cytoplasm. The protein is Small ribosomal subunit protein eS1 of Cicer arietinum (Chickpea).